Consider the following 227-residue polypeptide: 2-C-methyl-D-erythritol 4-phosphate cytidylyltransferase (227 aa).

It belongs to the IspD/TarI cytidylyltransferase family. IspD subfamily.

It carries out the reaction 2-C-methyl-D-erythritol 4-phosphate + CTP + H(+) = 4-CDP-2-C-methyl-D-erythritol + diphosphate. It functions in the pathway isoprenoid biosynthesis; isopentenyl diphosphate biosynthesis via DXP pathway; isopentenyl diphosphate from 1-deoxy-D-xylulose 5-phosphate: step 2/6. Catalyzes the formation of 4-diphosphocytidyl-2-C-methyl-D-erythritol from CTP and 2-C-methyl-D-erythritol 4-phosphate (MEP). In Deinococcus geothermalis (strain DSM 11300 / CIP 105573 / AG-3a), this protein is 2-C-methyl-D-erythritol 4-phosphate cytidylyltransferase.